Here is a 68-residue protein sequence, read N- to C-terminus: Large ribosomal subunit protein uL29 (68 aa).

It belongs to the universal ribosomal protein uL29 family.

In Roseobacter denitrificans (strain ATCC 33942 / OCh 114) (Erythrobacter sp. (strain OCh 114)), this protein is Large ribosomal subunit protein uL29.